A 1385-amino-acid polypeptide reads, in one-letter code: MRVLVHVNNAKQSGDGANNSNGTLINYNSNNKLFLEIHPNQSIWMIKTLLFNLFQIPPARQQLYLKVVDEINPRETSKAYSKLLQSYRLVKDYKIYEGTELQMVALEKEIPSEFLVPPKKTQSNSMEKLPHFTNLSMSSMSNMDEILSGSGGGRIHVLSSKKGEECPALCFAVGKGLYRGISGVIYEIKLYRVDSKGMLIVNTSLNFQIDVIKKDSISVEDRKMAFTYEQRKSDYSLLKLQPIIYGEYSISIKIDDTPICGSPFHCTIIDELNPNLKELAFSNEWIEEVVQLITLMSNKPSTIDKLFSFGIEGLMNLMFYPDPTIQIHIIGIFAKLIEKDKNKERVLKEFGMDFIFKLVSLDNWSNFMELRKLVASSLCILSCYKPFLNRFFKEVGIDVISLIARSDFIDCPRSCAIFLSRVSEISFELNEYLISDSIKETLIYLLSIQDNITVNCTLKTISNLSSSFDLKKESNIKLLSNLLEYCKEFQEISKKVLIFKSFSNFCVNESLCTFLISNGILDLITPTHDKSGYFGIPMFCQWESNTINYIISNNNEINLKQYGYEFNQIFKEETDYVFFLSLTISNMLVSTTSLKIHDHFSRGNGLNLLKQFIICHECSVRSEAFRSFMIISNSPNDQCKKHLIQSGIIPYLVSSLFDSLSVETPFIVNTLANLCKYDPTCVENMGVDDIDKFIELLHRDSTSSLSKSISYILSHLIRHDKYKQRIVNGGGKLFLQYLIEFVRQGEISVLKYISQSDLELTKEIGRGVSGVVKRGKWKGYEIAVKQFNEEELGFSEREFHSEATIMSVLRHDNIVHCVGGSAQPGKMYLVCDYYSRGSLYSVITANICPLSNARIVHLALQVAKGMNYLHSLGIIHRDLKPGNLLIDQDWNIRISDFGLSRVVDNRMTKTVGTPCYMAVEVLKGLTDYSQQADVYSFAFVLWECISRQIPYKDFAQIQWISMVLEDSFRPPIPDSCLPEFRDLITMCWTSNPDDRPSFQQIITYLENLRLKMQDQGIYQILTGGSSVGIGGVGVVGVGSGGNSDEHESNIDIDTVSGSNNNESSTAVSLNENKINIDMSMHPTEELKNLVEVSKDDNPTNSDYDIRSSSTSSSPSTLSAPQSPVGSTSPMGSTSTSPISNNNNRPTHDHQQPHQVKWERIVPDKPNPNLKSKRLSAFRNKAVPISITDNNNNNNSANNNNNNNSMKNNSNASRNTFSSVSSPSSSADLSSGIESSNNRDDSFLSSGSSLSEQHRSVSNSVSNSVGGFSLPPPPLAPSFYASMINEKISSSTPTDNNNNNNNNNNNNNNNNNNNNNNNNNNNNNNNNNNSNNSINNNNNNGIAINYTNSINNNKNSNNNTSNTKYPISKCKSNPSFEALKSKFDKD.

The 251-residue stretch at 758 to 1008 folds into the Protein kinase domain; the sequence is LELTKEIGRG…QQIITYLENL (251 aa). Residues 764 to 772 and K785 each bind ATP; that span reads IGRGVSGVV. Catalysis depends on D878, which acts as the Proton acceptor. Disordered regions lie at residues 1040–1074, 1091–1266, and 1287–1339; these read GGNSDEHESNIDIDTVSGSNNNESSTAVSLNENKI, EVSK…SVGG, and ISSS…NNNN. The span at 1055-1073 shows a compositional bias: polar residues; the sequence is VSGSNNNESSTAVSLNENK. The segment covering 1107 to 1144 has biased composition (low complexity); it reads SSSTSSSPSTLSAPQSPVGSTSPMGSTSTSPISNNNNR. Over residues 1145 to 1162 the composition is skewed to basic and acidic residues; it reads PTHDHQQPHQVKWERIVP. Low complexity-rich tracts occupy residues 1189–1232, 1242–1266, and 1295–1339; these read NNNN…SSGI, FLSSGSSLSEQHRSVSNSVSNSVGG, and NNNN…NNNN.

This sequence belongs to the protein kinase superfamily. TKL Ser/Thr protein kinase family.

The catalysed reaction is L-seryl-[protein] + ATP = O-phospho-L-seryl-[protein] + ADP + H(+). The enzyme catalyses L-threonyl-[protein] + ATP = O-phospho-L-threonyl-[protein] + ADP + H(+). The polypeptide is Probable serine/threonine-protein kinase DDB_G0268876 (Dictyostelium discoideum (Social amoeba)).